Here is a 434-residue protein sequence, read N- to C-terminus: Probable exopolygalacturonase X (434 aa).

Residues 1–23 (MKFLHTVAQTATLLLSLGASVEG) form the signal peptide. Residues 35–54 (HHPFRPLPASTPRTKTCHVR) are disordered. Residues Asn-113, Asn-129, and Asn-199 are each glycosylated (N-linked (GlcNAc...) asparagine). The stretch at 231 to 252 (SSNIVIQNSVVNNGDDCVSFKP) is one PbH1 1 repeat. Asp-245 acts as the Proton donor in catalysis. A disulfide bond links Cys-247 and Cys-264. 2 N-linked (GlcNAc...) asparagine glycosylation sites follow: Asn-253 and Asn-265. One copy of the PbH1 2 repeat lies at 254-274 (STDILVQNMHCNGSHGISVGS). His-268 is a catalytic residue. N-linked (GlcNAc...) asparagine glycans are attached at residues Asn-292, Asn-297, Asn-329, Asn-354, and Asn-364. A PbH1 3 repeat occupies 327-348 (VSNITYDRMYIENVDWAIEVTQ). The PbH1 4 repeat unit spans residues 362 to 394 (PSNLTISDVHIKNMWGTTSGKRDPNVGTIVCSS). A disulfide bond links Cys-392 and Cys-398. N-linked (GlcNAc...) asparagine glycans are attached at residues Asn-407 and Asn-430.

The protein belongs to the glycosyl hydrolase 28 family.

The protein resides in the secreted. The catalysed reaction is [(1-&gt;4)-alpha-D-galacturonosyl](n) + H2O = alpha-D-galacturonate + [(1-&gt;4)-alpha-D-galacturonosyl](n-1). In terms of biological role, specific in hydrolyzing the terminal glycosidic bond of polygalacturonic acid and oligogalacturonates. The polypeptide is Probable exopolygalacturonase X (pgaX) (Aspergillus terreus (strain NIH 2624 / FGSC A1156)).